A 97-amino-acid chain; its full sequence is Type 1 phosphatases regulator YPI2 (97 aa).

Positions 1-97 (MNKKKTKICC…KMMEKKSNNT (97 aa)) are disordered. Residues 43–53 (ENDKDLGFDER) show a composition bias toward basic and acidic residues. Residues 54 to 65 (RKRRVERRRRKL) are compositionally biased toward basic residues.

Belongs to the YPI1 family.

It localises to the nucleus. Its function is as follows. Regulator of type 1 phosphatases which maintains protein phosphatase activity under strict control. The protein is Type 1 phosphatases regulator YPI2 (YPI2) of Vanderwaltozyma polyspora (strain ATCC 22028 / DSM 70294 / BCRC 21397 / CBS 2163 / NBRC 10782 / NRRL Y-8283 / UCD 57-17) (Kluyveromyces polysporus).